A 558-amino-acid polypeptide reads, in one-letter code: Cyclomaltodextrinase (558 aa).

Residues Asn-143, Gly-168, and Asp-170 each coordinate Ca(2+). Substrate-binding residues include His-243 and Arg-323. The active-site Nucleophile is the Asp-325. Catalysis depends on Glu-354, which acts as the Proton donor. Residues 420-421 (HD), Asp-465, and Arg-469 contribute to the substrate site.

Belongs to the glycosyl hydrolase 13 family. As to quaternary structure, monomer. Depending on the pH of the solution, exists as a monomer, a homodimer or as an assembly of six homodimers forming a dodecamer, which is catalytically the most efficient form of the enzyme. It depends on Ca(2+) as a cofactor.

It carries out the reaction cyclomaltodextrin + H2O = linear maltodextrin. The enzyme catalyses Hydrolysis of pullulan to panose (6-alpha-D-glucosylmaltose).. Its activity is regulated as follows. Hydrolysis of beta-cyclodextrin is inhibited by Cu(2+), Zn(2+) and Ag(+), and activated by Ca(2+), EGTA and EDTA. Activity is increased over twofold in the presence of 5 mM EDTA. Competitively inhibited by acarbose and methyl 6-amino-6-deoxy-alpha-D-glucopyranoside by reducing the rate of the ring opening step of the reaction. Hydrolyzes alpha-, beta- and gamma-cyclodextrins and the resulting linear maltodextrins, with the highest activity with beta-cyclodextrin (cyclomaltoheptaose). Soluble starch is hydrolyzed slowly, but it is nevertheless preferred over pullulan as a substrate. Is able to hydrolyze amylose and amylopectin, with a very strong preference for amylose, with maltose and glucose as the main products. Maltose and glucose are the main hydrolysis products of cyclomaltodextrins, maltodextrins and starch, whereas panose is the main hydrolysis product of pullulan. Acarbose is partially hydrolyzed to glucose and pseudotrisaccharide. No activity with maltose as substrate. Has transglycosylating activity with high concentrations of maltotriose, maltotetraose and starch. This Bacillus sp protein is Cyclomaltodextrinase.